We begin with the raw amino-acid sequence, 394 residues long: Seipin (394 aa).

Residues 1 to 27 are Cytoplasmic-facing; it reads MVNDPPVPALLWAQEMGHVMAGRARKL. A helical membrane pass occupies residues 28 to 48; sequence LLQFGVFFCTILLLLWVSVFL. The Lumenal portion of the chain corresponds to 49–242; it reads YGSFYYSYMP…TCAFVGVASN (194 aa). Residues Asn-88 and Asn-242 are each glycosylated (N-linked (GlcNAc...) asparagine). Residues 243–263 form a helical membrane-spanning segment; it reads FTFLSVIVLFSYMQWVWGGIW. Residues 264-394 are Cytoplasmic-facing; it reads PRQRLSLQVN…VRQRPICSSS (131 aa). The segment at 281–394 is disordered; sequence RKDIQRKVSA…VRQRPICSSS (114 aa). Ser-289 bears the Phosphoserine mark. A compositionally biased stretch (low complexity) spans 292–303; that stretch reads QPGPQGQEESPQ. Residues Ser-346 and Ser-351 each carry the phosphoserine modification.

It belongs to the seipin family. Undecamer (an oligomer having eleven subunits). Oligomerization is important for its function in lipid droplet formation. Interacts with LDAF1 to form an oligomeric complex. Interacts with RAB18. Interacts with ZFYVE1 in a RAB18-dependent manner.

The protein resides in the endoplasmic reticulum membrane. It localises to the lipid droplet. Its function is as follows. Plays a crucial role in the formation of lipid droplets (LDs) which are storage organelles at the center of lipid and energy homeostasis. In association with LDAF1, defines the sites of LD formation in the ER. Also required for growth and maturation of small nascent LDs into larger mature LDs. Mediates the formation and/or stabilization of endoplasmic reticulum-lipid droplets (ER-LD) contacts, facilitating protein and lipid delivery from the ER into growing LDs. Regulates the maturation of ZFYVE1-positive nascent LDs and the function of the RAB18-ZFYVE1 complex in mediating the formation of ER-LD contacts. Binds anionic phospholipids including phosphatidic acid. Plays an important role in the differentiation and development of adipocytes. The polypeptide is Seipin (Bos taurus (Bovine)).